A 74-amino-acid polypeptide reads, in one-letter code: MAKAKPAWSYETAIAEVEQIVQQLESGELPLAEVVEQFQQASQRLQQCDRFLRDKQAELDLLIESLDEPPVPPQ.

This sequence belongs to the XseB family. As to quaternary structure, heterooligomer composed of large and small subunits.

Its subcellular location is the cytoplasm. It carries out the reaction Exonucleolytic cleavage in either 5'- to 3'- or 3'- to 5'-direction to yield nucleoside 5'-phosphates.. Its function is as follows. Bidirectionally degrades single-stranded DNA into large acid-insoluble oligonucleotides, which are then degraded further into small acid-soluble oligonucleotides. This Synechococcus elongatus (strain ATCC 33912 / PCC 7942 / FACHB-805) (Anacystis nidulans R2) protein is Exodeoxyribonuclease 7 small subunit.